Consider the following 111-residue polypeptide: Propane 2-monooxygenase, effector component (111 aa).

Belongs to the TmoD/XamoD family. The propane 2-monooxygenase multicomponent enzyme system is composed of an electron transfer component and a monooxygenase component interacting with the effector protein PrmD. The electron transfer component is composed of a reductase (PrmB), and the monooxygenase component is formed by a large subunit (PrmA) and a small subunit (PrmC).

In terms of biological role, effector component of the propane 2-monooxygenase multicomponent enzyme system which is involved in the degradation of propane via the O2-dependent hydroxylation of propane. This Gordonia sp. (strain TY-5) protein is Propane 2-monooxygenase, effector component.